The primary structure comprises 204 residues: MKNESTFIDVPAESSSAMKGKAPLIGVARDHTTSGSGGYNRGLAIFDFLLRLAAIVAALAAAATMGTSDETLPFFTQFLQFEASYDDLPTFQFFVIAMALVGGYLVLSLPISVVTILRPLATAPRLLLLVLDTGVLALNTAAASSAAAISYLAHSGNQNTNWLPICQQFGDFCQKSSGAVVSAFVSVVFFTILVVISGVALKRH.

Over 1-42 the chain is Cytoplasmic; the sequence is MKNESTFIDVPAESSSAMKGKAPLIGVARDHTTSGSGGYNRG. The chain crosses the membrane as a helical span at residues 43 to 63; it reads LAIFDFLLRLAAIVAALAAAA. Residues 64-92 are Extracellular-facing; it reads TMGTSDETLPFFTQFLQFEASYDDLPTFQ. The chain crosses the membrane as a helical span at residues 93 to 113; it reads FFVIAMALVGGYLVLSLPISV. Topologically, residues 114–125 are cytoplasmic; that stretch reads VTILRPLATAPR. Residues 126-146 traverse the membrane as a helical segment; the sequence is LLLLVLDTGVLALNTAAASSA. At 147 to 178 the chain is on the extracellular side; sequence AAISYLAHSGNQNTNWLPICQQFGDFCQKSSG. Residues 179–199 traverse the membrane as a helical segment; that stretch reads AVVSAFVSVVFFTILVVISGV. Over 200–204 the chain is Cytoplasmic; that stretch reads ALKRH.

It belongs to the Casparian strip membrane proteins (CASP) family. As to quaternary structure, homodimer and heterodimers with other CASP proteins. Interacts with CASP1, CASP3 and CASP4.

The protein localises to the cell membrane. Regulates membrane-cell wall junctions and localized cell wall deposition. Required for establishment of the Casparian strip membrane domain (CSD) and the subsequent formation of Casparian strips, a cell wall modification of the root endodermis that determines an apoplastic barrier between the intraorganismal apoplasm and the extraorganismal apoplasm and prevents lateral diffusion. This is Casparian strip membrane protein 2 (CASP2) from Arabidopsis thaliana (Mouse-ear cress).